Reading from the N-terminus, the 302-residue chain is Putative fructose-bisphosphate aldolase (302 aa).

Aspartate 86 functions as the Proton donor in the catalytic mechanism. Zn(2+) contacts are provided by histidine 87, aspartate 116, glutamate 146, and histidine 192. Glycine 193 is a binding site for dihydroxyacetone phosphate. Residue histidine 223 coordinates Zn(2+). Dihydroxyacetone phosphate-binding positions include 224 to 226 and 245 to 248; these read GAD and NVNR.

This sequence belongs to the class II fructose-bisphosphate aldolase family. As to quaternary structure, homodimer. Zn(2+) is required as a cofactor.

The catalysed reaction is beta-D-fructose 1,6-bisphosphate = D-glyceraldehyde 3-phosphate + dihydroxyacetone phosphate. Its pathway is carbohydrate degradation; glycolysis; D-glyceraldehyde 3-phosphate and glycerone phosphate from D-glucose: step 4/4. Catalyzes the aldol condensation of dihydroxyacetone phosphate (DHAP or glycerone-phosphate) with glyceraldehyde 3-phosphate (G3P) to form fructose 1,6-bisphosphate (FBP) in gluconeogenesis and the reverse reaction in glycolysis. This is Putative fructose-bisphosphate aldolase from Coccidioides immitis (strain RS) (Valley fever fungus).